Reading from the N-terminus, the 261-residue chain is Imidazole glycerol phosphate synthase subunit HisF (261 aa).

Active-site residues include Asp-11 and Asp-130.

It belongs to the HisA/HisF family. As to quaternary structure, heterodimer of HisH and HisF.

It is found in the cytoplasm. The catalysed reaction is 5-[(5-phospho-1-deoxy-D-ribulos-1-ylimino)methylamino]-1-(5-phospho-beta-D-ribosyl)imidazole-4-carboxamide + L-glutamine = D-erythro-1-(imidazol-4-yl)glycerol 3-phosphate + 5-amino-1-(5-phospho-beta-D-ribosyl)imidazole-4-carboxamide + L-glutamate + H(+). It participates in amino-acid biosynthesis; L-histidine biosynthesis; L-histidine from 5-phospho-alpha-D-ribose 1-diphosphate: step 5/9. In terms of biological role, IGPS catalyzes the conversion of PRFAR and glutamine to IGP, AICAR and glutamate. The HisF subunit catalyzes the cyclization activity that produces IGP and AICAR from PRFAR using the ammonia provided by the HisH subunit. The polypeptide is Imidazole glycerol phosphate synthase subunit HisF (Heliobacterium modesticaldum (strain ATCC 51547 / Ice1)).